We begin with the raw amino-acid sequence, 97 residues long: Acylphosphatase (97 aa).

The region spanning 5 to 92 (RAHVWISGRV…GEFVRFEITF (88 aa)) is the Acylphosphatase-like domain. Active-site residues include Arg20 and Asn38.

It belongs to the acylphosphatase family.

It carries out the reaction an acyl phosphate + H2O = a carboxylate + phosphate + H(+). This is Acylphosphatase (acyP) from Syntrophobacter fumaroxidans (strain DSM 10017 / MPOB).